Consider the following 470-residue polypeptide: MTNFKDNDGDGTKLHVVMFPWLAFGHMVPYLELSKLIAQKGHKVSFISTPRNIDRLLPRLPENLSSVINFVKLSLPVGDNKLPEDGEATTDVPFELIPYLKIAYDGLKVPVTEFLESSKPDWVLQDFAGFWLPPISRRLGIKTGFFSAFNGATLGILKPPGFEEYRTSPADFMKPPKWVPFETSVAFKLFECRFIFKGFMAETTEGNVPDIHRVGGVIDGCDVIFVRSCYEYEAEWLGLTQELHRKPVIPVGVLPPKPDEKFEDTDTWLSVKKWLDSRKSKSIVYVAFGSEAKPSQTELNEIALGLELSGLPFFWVLKTRRGPWDTEPVELPEGFEERTADRGMVWRGWVEQLRTLSHDSIGLVLTHPGWGTIIEAIRFAKPMAMLVFVYDQGLNARVIEEKKIGYMIPRDETEGFFTKESVANSLRLVMVEEEGKVYRENVKEMKGVFGDMDRQDRYVDSFLEYLVTNR.

UDP-alpha-D-glucose contacts are provided by residues Ser-290, 350–352 (VEQ), 367–375 (HPGWGTIIE), and 389–392 (VYDQ).

Belongs to the UDP-glycosyltransferase family.

This is UDP-glycosyltransferase 91A1 (UGT91A1) from Arabidopsis thaliana (Mouse-ear cress).